The chain runs to 300 residues: DNA repair protein RecO (300 aa).

The protein belongs to the RecO family.

Involved in DNA repair and RecF pathway recombination. This Nostoc punctiforme (strain ATCC 29133 / PCC 73102) protein is DNA repair protein RecO.